A 452-amino-acid polypeptide reads, in one-letter code: Peptidase M20 domain-containing protein SMAC_03666.2 (452 aa).

The signal sequence occupies residues 1–28; that stretch reads MKATSNLLLLWGTSLLSPSSAFVIDNHH. N-linked (GlcNAc...) asparagine glycosylation is present at Asn-140. Asp-186 serves as a coordination point for Zn(2+). The Proton acceptor role is filled by Glu-220. Residue Glu-221 coordinates Zn(2+). Asn-315 carries N-linked (GlcNAc...) asparagine glycosylation.

Belongs to the peptidase M20A family. Zn(2+) is required as a cofactor.

It is found in the secreted. This chain is Peptidase M20 domain-containing protein SMAC_03666.2, found in Sordaria macrospora (strain ATCC MYA-333 / DSM 997 / K(L3346) / K-hell).